The following is a 158-amino-acid chain: Cyclic pyranopterin monophosphate synthase (158 aa).

Residues 75 to 77 and 113 to 114 each bind substrate; these read LCH and ME. Residue Asp128 is part of the active site.

The protein belongs to the MoaC family. As to quaternary structure, homohexamer; trimer of dimers.

The catalysed reaction is (8S)-3',8-cyclo-7,8-dihydroguanosine 5'-triphosphate = cyclic pyranopterin phosphate + diphosphate. It functions in the pathway cofactor biosynthesis; molybdopterin biosynthesis. Functionally, catalyzes the conversion of (8S)-3',8-cyclo-7,8-dihydroguanosine 5'-triphosphate to cyclic pyranopterin monophosphate (cPMP). This is Cyclic pyranopterin monophosphate synthase from Pasteurella multocida (strain Pm70).